We begin with the raw amino-acid sequence, 578 residues long: Probable arginine--tRNA ligase, mitochondrial (578 aa).

Residues 1–16 constitute a mitochondrion transit peptide; sequence MACGFRRSIACQLSRV. L-arginine is bound by residues 133-135, histidine 144, tyrosine 322, aspartate 326, and glutamine 350; that span reads SPN. Positions 133 to 144 match the 'HIGH' region motif; it reads SPNIAKKFHVGH. An N6-acetyllysine modification is found at lysine 568.

It belongs to the class-I aminoacyl-tRNA synthetase family.

Its subcellular location is the mitochondrion membrane. The catalysed reaction is tRNA(Arg) + L-arginine + ATP = L-arginyl-tRNA(Arg) + AMP + diphosphate. Catalyzes the attachment of arginine to tRNA(Arg) in a two-step reaction: arginine is first activated by ATP to form Arg-AMP and then transferred to the acceptor end of tRNA(Arg). This is Probable arginine--tRNA ligase, mitochondrial (Rars2) from Mus musculus (Mouse).